Reading from the N-terminus, the 145-residue chain is 3-hydroxyacyl-[acyl-carrier-protein] dehydratase FabZ (145 aa).

The active site involves His-51.

The protein belongs to the thioester dehydratase family. FabZ subfamily.

It localises to the cytoplasm. It carries out the reaction a (3R)-hydroxyacyl-[ACP] = a (2E)-enoyl-[ACP] + H2O. Its function is as follows. Involved in unsaturated fatty acids biosynthesis. Catalyzes the dehydration of short chain beta-hydroxyacyl-ACPs and long chain saturated and unsaturated beta-hydroxyacyl-ACPs. This is 3-hydroxyacyl-[acyl-carrier-protein] dehydratase FabZ from Staphylococcus carnosus (strain TM300).